The primary structure comprises 123 residues: SOSS complex subunit C homolog (123 aa).

The protein belongs to the SOSS-C family.

The sequence is that of SOSS complex subunit C homolog from Drosophila ananassae (Fruit fly).